The following is a 287-amino-acid chain: Glycine--tRNA ligase alpha subunit (287 aa).

This sequence belongs to the class-II aminoacyl-tRNA synthetase family. Tetramer of two alpha and two beta subunits.

It is found in the cytoplasm. It carries out the reaction tRNA(Gly) + glycine + ATP = glycyl-tRNA(Gly) + AMP + diphosphate. The chain is Glycine--tRNA ligase alpha subunit from Campylobacter jejuni subsp. jejuni serotype O:23/36 (strain 81-176).